A 563-amino-acid chain; its full sequence is Tripeptidyl-peptidase 1 (563 aa).

Residues 1–19 (MGLQACLLGLFALILSGKC) form the signal peptide. Residues 20 to 195 (SYSPEPDQRR…PEPQVTGTVG (176 aa)) constitute a propeptide, removed in mature form. Cys-111 and Cys-122 are joined by a disulfide. Residues 199–563 (GVTPSVIRKR…PALLKTLLNP (365 aa)) form the Peptidase S53 domain. 2 N-linked (GlcNAc...) asparagine glycosylation sites follow: Asn-210 and Asn-222. Catalysis depends on charge relay system residues Glu-272 and Asp-276. Residues Asn-286, Asn-313, and Asn-443 are each glycosylated (N-linked (GlcNAc...) asparagine). 2 cysteine pairs are disulfide-bonded: Cys-365–Cys-526 and Cys-522–Cys-537. Ser-475 (charge relay system) is an active-site residue. Residues Asp-517 and Val-518 each coordinate Ca(2+). Ca(2+) is bound by residues Gly-539, Gly-541, and Asp-543.

In terms of assembly, monomer. Interacts with CLN5. Interacts with CLN3. Requires Ca(2+) as cofactor. Post-translationally, activated by autocatalytic proteolytical processing upon acidification. N-glycosylation is required for processing and activity.

Its subcellular location is the lysosome. The protein localises to the melanosome. The enzyme catalyses Release of an N-terminal tripeptide from a polypeptide, but also has endopeptidase activity.. Functionally, lysosomal serine protease with tripeptidyl-peptidase I activity. May act as a non-specific lysosomal peptidase which generates tripeptides from the breakdown products produced by lysosomal proteinases. Requires substrates with an unsubstituted N-terminus. The sequence is that of Tripeptidyl-peptidase 1 (TPP1) from Macaca fascicularis (Crab-eating macaque).